The following is a 256-amino-acid chain: MSSVFGSVHILAMIAIQLLLIHSVSSLNLTNAYLHHKCSNTQGKYKQGSAFEKNLNLVLSTITSIGNFRDGFRYTEEGEDPNNVFVMFQCRGDSYWSKCPPCISTAVSGLRRRCPRNKGAIIWYDQCLLKISSVASFNKIDYENDFYLSNPKNMSDRELFNKETSALLEKLANKASDRNNLDGKQLVLYAAGEKRIGTKKVSAMVQCTKDLIFTKCFECLEGILRKFPECCDGKQGGRVLGTSCNFRYELYPFLRN.

An N-terminal signal peptide occupies residues 1–26 (MSSVFGSVHILAMIAIQLLLIHSVSS). Gnk2-homologous domains lie at 33–136 (YLHH…SVAS) and 142–253 (YEND…LYPF).

The protein belongs to the cysteine-rich repeat secretory protein family.

Its subcellular location is the secreted. This Arabidopsis thaliana (Mouse-ear cress) protein is Cysteine-rich repeat secretory protein 29 (CRRSP29).